The chain runs to 206 residues: Protein-methionine-sulfoxide reductase heme-binding subunit MsrQ (206 aa).

6 consecutive transmembrane segments (helical) span residues 14-34 (IKPL…WLGA), 45-65 (FLTR…LAIT), 82-102 (MCGL…VWWD), 118-138 (PFIT…ATST), 149-169 (WQTL…HFWW), and 179-199 (QPLL…AAWW).

This sequence belongs to the MsrQ family. As to quaternary structure, heterodimer of a catalytic subunit (MsrP) and a heme-binding subunit (MsrQ). Requires FMN as cofactor. The cofactor is heme b.

It is found in the cell inner membrane. In terms of biological role, part of the MsrPQ system that repairs oxidized periplasmic proteins containing methionine sulfoxide residues (Met-O), using respiratory chain electrons. Thus protects these proteins from oxidative-stress damage caused by reactive species of oxygen and chlorine generated by the host defense mechanisms. MsrPQ is essential for the maintenance of envelope integrity under bleach stress, rescuing a wide series of structurally unrelated periplasmic proteins from methionine oxidation. MsrQ provides electrons for reduction to the reductase catalytic subunit MsrP, using the quinone pool of the respiratory chain. The protein is Protein-methionine-sulfoxide reductase heme-binding subunit MsrQ of Bordetella pertussis (strain Tohama I / ATCC BAA-589 / NCTC 13251).